Reading from the N-terminus, the 403-residue chain is Tyrosine--tRNA ligase (403 aa).

The short motif at 46-55 (PTAPDLHLGH) is the 'HIGH' region element. A 'KMSKS' region motif is present at residues 230–234 (KMSKS). K233 contributes to the ATP binding site. One can recognise an S4 RNA-binding domain in the interval 342-402 (LFITQILNQA…GKKAYAKVTV (61 aa)).

The protein belongs to the class-I aminoacyl-tRNA synthetase family. TyrS type 2 subfamily. Homodimer.

Its subcellular location is the cytoplasm. The enzyme catalyses tRNA(Tyr) + L-tyrosine + ATP = L-tyrosyl-tRNA(Tyr) + AMP + diphosphate + H(+). Catalyzes the attachment of tyrosine to tRNA(Tyr) in a two-step reaction: tyrosine is first activated by ATP to form Tyr-AMP and then transferred to the acceptor end of tRNA(Tyr). The polypeptide is Tyrosine--tRNA ligase (Psychrobacter arcticus (strain DSM 17307 / VKM B-2377 / 273-4)).